A 256-amino-acid polypeptide reads, in one-letter code: uncharacterized protein (256 aa).

The span at 201–214 (ACKEGVDSSCKEEG) shows a compositional bias: basic and acidic residues. The interval 201–231 (ACKEGVDSSCKEEGGGCEEEGSGSEEDSDDS) is disordered. Residues 215-231 (GGCEEEGSGSEEDSDDS) show a composition bias toward acidic residues.

Its subcellular location is the mitochondrion. This is an uncharacterized protein from Zea mays (Maize).